We begin with the raw amino-acid sequence, 379 residues long: Cytochrome b (379 aa).

Transmembrane regions (helical) follow at residues 33–53 (FGSL…FLAM), 77–98 (WFLR…YLHI), 113–133 (WNVG…GYVL), and 178–198 (FFTF…IHLL). His83 and His97 together coordinate heme b. Heme b-binding residues include His182 and His196. His201 provides a ligand contact to a ubiquinone. 4 helical membrane passes run 226–246 (YKDL…TLFS), 288–308 (LGGV…PITH), 320–340 (LTQI…WIGG), and 347–367 (FIII…VFAP).

The protein belongs to the cytochrome b family. The cytochrome bc1 complex contains 3 respiratory subunits (MT-CYB, CYC1 and UQCRFS1), 2 core proteins (UQCRC1 and UQCRC2) and probably 6 low-molecular weight proteins. Requires heme b as cofactor.

It is found in the mitochondrion inner membrane. Component of the ubiquinol-cytochrome c reductase complex (complex III or cytochrome b-c1 complex) that is part of the mitochondrial respiratory chain. The b-c1 complex mediates electron transfer from ubiquinol to cytochrome c. Contributes to the generation of a proton gradient across the mitochondrial membrane that is then used for ATP synthesis. The chain is Cytochrome b (mt-cyb) from Amia calva (Bowfin).